The chain runs to 345 residues: GDP-mannose transporter (345 aa).

Topologically, residues 1 to 8 (MDNHMLNR) are cytoplasmic. Residues 9–29 (ISKSPILPVVSYCMASILMTL) form a helical membrane-spanning segment. Over 30 to 40 (TNKYVLSSPGY) the chain is Lumenal. Residues 41-61 (NMNFLLLTVQSTVCVAAIGIL) form a helical membrane-spanning segment. Residues 62 to 78 (KRLKVINYRDFDFREAK) lie on the Cytoplasmic side of the membrane. Residues 79–101 (FWFPISFLLVAMIYTASKALQFL) form a helical membrane-spanning segment. Residues 102-104 (SVP) lie on the Lumenal side of the membrane. Residues 105 to 127 (VYTIFKNLTIIIIAYGEVLWFGG) traverse the membrane as a helical segment. Over 128 to 131 (HVTA) the chain is Cytoplasmic. The chain crosses the membrane as a helical span at residues 132–150 (LTLFSFGLMVLSSIVAAWA). Residues 151 to 161 (DIQSSSFASQT) are Lumenal-facing. Residues 162–182 (LNSGYLWMVLNCLTNAAFVLA) traverse the membrane as a helical segment. The Cytoplasmic segment spans residues 183–194 (MRKRIKLTNFRD). The chain crosses the membrane as a helical span at residues 195 to 215 (FDTMFYNNLLSIPVLVICTLF). The Lumenal portion of the chain corresponds to 216-233 (TEDWSAENIAQNFPPDAK). Residues 234–254 (FGVLMAMAISGVSSVGISYTS) form a helical membrane-spanning segment. The Cytoplasmic segment spans residues 255–264 (AWCVRVTSST). The chain crosses the membrane as a helical span at residues 265–285 (TYSMVGALNKLPLAIAGLVFF). Residues 286 to 288 (DAP) are Lumenal-facing. The chain crosses the membrane as a helical span at residues 289–309 (ITFGSVTAILLGFISGVVYAV). Topologically, residues 310 to 345 (AKSQQQRQKDPATILPMTHNPVSASSQSMRDSLSKS) are cytoplasmic. Residues 319–345 (DPATILPMTHNPVSASSQSMRDSLSKS) are disordered. The span at 329–345 (NPVSASSQSMRDSLSKS) shows a compositional bias: polar residues.

Belongs to the TPT transporter family. SLC35D subfamily. Homooligomer.

The protein resides in the golgi apparatus membrane. It is found in the cytoplasmic vesicle membrane. The protein localises to the endoplasmic reticulum membrane. In terms of biological role, involved in the import of GDP-mannose from the cytoplasm into the Golgi lumen. This chain is GDP-mannose transporter (vrg4), found in Schizosaccharomyces pombe (strain 972 / ATCC 24843) (Fission yeast).